Reading from the N-terminus, the 97-residue chain is Late transcription unit B protein (97 aa).

Residues 24 to 45 are disordered; sequence SIEGETKKEHKHHYSTASKEKE.

The chain is Late transcription unit B protein (ltuB) from Chlamydia trachomatis serovar D (strain ATCC VR-885 / DSM 19411 / UW-3/Cx).